The sequence spans 478 residues: Cytochrome c-552 (478 aa).

The signal sequence occupies residues methionine 1–alanine 26. Histidine 94 is a heme c binding site. Heme is bound by residues cysteine 122, cysteine 125, and lysine 126. 6 residues coordinate heme c: cysteine 160, cysteine 163, histidine 164, cysteine 209, cysteine 212, and histidine 213. The Ca(2+) site is built by glutamate 215, tyrosine 216, lysine 261, and glutamine 263. Tyrosine 216 contacts substrate. Histidine 264 provides a ligand contact to substrate. Heme c-binding residues include histidine 275, cysteine 282, cysteine 285, histidine 286, histidine 301, cysteine 314, cysteine 317, histidine 318, and histidine 393.

It belongs to the cytochrome c-552 family. Ca(2+) is required as a cofactor. The cofactor is heme c.

It is found in the periplasm. The catalysed reaction is 6 Fe(III)-[cytochrome c] + NH4(+) + 2 H2O = 6 Fe(II)-[cytochrome c] + nitrite + 8 H(+). Its pathway is nitrogen metabolism; nitrate reduction (assimilation). Its function is as follows. Catalyzes the reduction of nitrite to ammonia, consuming six electrons in the process. The chain is Cytochrome c-552 from Escherichia coli O6:H1 (strain CFT073 / ATCC 700928 / UPEC).